Here is a 341-residue protein sequence, read N- to C-terminus: Probable sulfurtransferase (341 aa).

4 residues coordinate Zn(2+): cysteine 40, cysteine 42, cysteine 58, and cysteine 61. Position 88 (glycine 88) interacts with ATP. The [4Fe-4S] cluster site is built by cysteine 176 and cysteine 179. ATP is bound by residues arginine 183 and glycine 202. Cysteine 267 contributes to the [4Fe-4S] cluster binding site. 4 residues coordinate Zn(2+): cysteine 316, cysteine 319, cysteine 328, and cysteine 331.

The protein belongs to the TtcA family. The cofactor is [4Fe-4S] cluster. Mg(2+) serves as cofactor.

The chain is Probable sulfurtransferase from Methanocaldococcus jannaschii (strain ATCC 43067 / DSM 2661 / JAL-1 / JCM 10045 / NBRC 100440) (Methanococcus jannaschii).